Here is a 364-residue protein sequence, read N- to C-terminus: S-adenosylmethionine:tRNA ribosyltransferase-isomerase (364 aa).

This sequence belongs to the QueA family. As to quaternary structure, monomer.

It is found in the cytoplasm. The catalysed reaction is 7-aminomethyl-7-carbaguanosine(34) in tRNA + S-adenosyl-L-methionine = epoxyqueuosine(34) in tRNA + adenine + L-methionine + 2 H(+). It functions in the pathway tRNA modification; tRNA-queuosine biosynthesis. Functionally, transfers and isomerizes the ribose moiety from AdoMet to the 7-aminomethyl group of 7-deazaguanine (preQ1-tRNA) to give epoxyqueuosine (oQ-tRNA). The sequence is that of S-adenosylmethionine:tRNA ribosyltransferase-isomerase from Bradyrhizobium sp. (strain BTAi1 / ATCC BAA-1182).